The chain runs to 281 residues: Bifunctional N-acyl-homoserine lactone acylase/prephenate dehydratase (281 aa).

The Prephenate dehydratase domain occupies 6 to 181 (IIAFQGRPGA…NTTRFYIASR (176 aa)). The region spanning 196 to 273 (TLLFRVNNQP…EQQEILGVYP (78 aa)) is the ACT domain. Residues Ala-207, Leu-208, Asn-221, and Met-222 each contribute to the L-phenylalanine site.

Homodimer.

It catalyses the reaction an N-acyl-L-homoserine lactone + H2O = L-homoserine lactone + a carboxylate. It carries out the reaction prephenate + H(+) = 3-phenylpyruvate + CO2 + H2O. The protein operates within amino-acid biosynthesis; L-phenylalanine biosynthesis; phenylpyruvate from prephenate: step 1/1. In terms of biological role, multifunctional enzyme that acts on N-acyl-homoserine lactones (AHLs), beta-lactam antibiotics and shows prephenate dehydratase activity. Acts as an acylase on AHL and hydrolyzes the amide bond of the acyl side-chain of AHL molecules, releasing homoserine lactone (HSL) and the fatty acid. Can use different 3-oxo-acyl homoserine lactones, such as 3-oxo-decanoyl homoserine lactone, which is the preferred substrate, 3-oxo-octanoyl homoserine lactone, 3-oxo-hexanoyl homoserine lactone and 3-oxo-dodecanoyl homoserine lactone. It can also degrade various beta-lactam antibiotics, including penicillin G, amoxicillin and ampicillin, but not cefotaxime. In addition, it can complement a phenylalanine auxotrophic E.coli mutant, which carries a kanamycin gene inserted into pheA, suggesting that GqqA can also function as a prephenate dehydratase. Involved in bacterial quorum quenching (QQ) and cellulose biofilm formation. This chain is Bifunctional N-acyl-homoserine lactone acylase/prephenate dehydratase, found in Komagataeibacter europaeus (Gluconacetobacter europaeus).